The sequence spans 606 residues: Aspartate--tRNA(Asp/Asn) ligase (606 aa).

E172 is a binding site for L-aspartate. The segment at 196–199 is aspartate; it reads QLFK. R218 provides a ligand contact to L-aspartate. Residues 218–220 and Q227 each bind ATP; that span reads RDE. H448 provides a ligand contact to L-aspartate. E482 contributes to the ATP binding site. An L-aspartate-binding site is contributed by R489. 534-537 is a binding site for ATP; it reads GWDR.

The protein belongs to the class-II aminoacyl-tRNA synthetase family. Type 1 subfamily. As to quaternary structure, homodimer.

It localises to the cytoplasm. It catalyses the reaction tRNA(Asx) + L-aspartate + ATP = L-aspartyl-tRNA(Asx) + AMP + diphosphate. Functionally, aspartyl-tRNA synthetase with relaxed tRNA specificity since it is able to aspartylate not only its cognate tRNA(Asp) but also tRNA(Asn). Reaction proceeds in two steps: L-aspartate is first activated by ATP to form Asp-AMP and then transferred to the acceptor end of tRNA(Asp/Asn). The protein is Aspartate--tRNA(Asp/Asn) ligase of Saccharopolyspora erythraea (strain ATCC 11635 / DSM 40517 / JCM 4748 / NBRC 13426 / NCIMB 8594 / NRRL 2338).